A 360-amino-acid chain; its full sequence is NAD(P)H-quinone oxidoreductase subunit 1, chloroplastic (360 aa).

The next 8 helical transmembrane spans lie at 27–47 (IWIF…VLVI), 98–118 (FSIG…VIPF), 129–149 (IGIF…LMSG), 165–185 (AAQS…ISLL), 203–223 (FWGW…ISSL), 253–273 (FGLF…FVTV), 297–317 (IFGT…FLFV), and 340–360 (FLLP…LFSL).

Belongs to the complex I subunit 1 family. In terms of assembly, NDH is composed of at least 16 different subunits, 5 of which are encoded in the nucleus.

It is found in the plastid. The protein localises to the chloroplast thylakoid membrane. It carries out the reaction a plastoquinone + NADH + (n+1) H(+)(in) = a plastoquinol + NAD(+) + n H(+)(out). It catalyses the reaction a plastoquinone + NADPH + (n+1) H(+)(in) = a plastoquinol + NADP(+) + n H(+)(out). Functionally, NDH shuttles electrons from NAD(P)H:plastoquinone, via FMN and iron-sulfur (Fe-S) centers, to quinones in the photosynthetic chain and possibly in a chloroplast respiratory chain. The immediate electron acceptor for the enzyme in this species is believed to be plastoquinone. Couples the redox reaction to proton translocation, and thus conserves the redox energy in a proton gradient. This Arabidopsis thaliana (Mouse-ear cress) protein is NAD(P)H-quinone oxidoreductase subunit 1, chloroplastic.